The sequence spans 183 residues: A-type ATP synthase subunit E (183 aa).

Belongs to the V-ATPase E subunit family. In terms of assembly, has multiple subunits with at least A(3), B(3), C, D, E, F, H, I and proteolipid K(x).

It localises to the cell membrane. In terms of biological role, component of the A-type ATP synthase that produces ATP from ADP in the presence of a proton gradient across the membrane. In Methanosarcina acetivorans (strain ATCC 35395 / DSM 2834 / JCM 12185 / C2A), this protein is A-type ATP synthase subunit E.